The sequence spans 161 residues: Protein-export protein SecB (161 aa).

It belongs to the SecB family. As to quaternary structure, homotetramer, a dimer of dimers. One homotetramer interacts with 1 SecA dimer.

The protein resides in the cytoplasm. Its function is as follows. One of the proteins required for the normal export of preproteins out of the cell cytoplasm. It is a molecular chaperone that binds to a subset of precursor proteins, maintaining them in a translocation-competent state. It also specifically binds to its receptor SecA. The polypeptide is Protein-export protein SecB (Ectopseudomonas mendocina (strain ymp) (Pseudomonas mendocina)).